The chain runs to 555 residues: Oxygen-dependent choline dehydrogenase (555 aa).

D4–E33 lines the FAD pocket. The segment at Q180 to R202 is disordered. H473 serves as the catalytic Proton acceptor.

This sequence belongs to the GMC oxidoreductase family. It depends on FAD as a cofactor.

The enzyme catalyses choline + A = betaine aldehyde + AH2. It carries out the reaction betaine aldehyde + NAD(+) + H2O = glycine betaine + NADH + 2 H(+). The protein operates within amine and polyamine biosynthesis; betaine biosynthesis via choline pathway; betaine aldehyde from choline (cytochrome c reductase route): step 1/1. Functionally, involved in the biosynthesis of the osmoprotectant glycine betaine. Catalyzes the oxidation of choline to betaine aldehyde and betaine aldehyde to glycine betaine at the same rate. This Serratia proteamaculans (strain 568) protein is Oxygen-dependent choline dehydrogenase.